The following is a 107-amino-acid chain: Nucleoid-associated protein Mlg_1509 (107 aa).

It belongs to the YbaB/EbfC family. As to quaternary structure, homodimer.

The protein resides in the cytoplasm. Its subcellular location is the nucleoid. Functionally, binds to DNA and alters its conformation. May be involved in regulation of gene expression, nucleoid organization and DNA protection. The sequence is that of Nucleoid-associated protein Mlg_1509 from Alkalilimnicola ehrlichii (strain ATCC BAA-1101 / DSM 17681 / MLHE-1).